Consider the following 239-residue polypeptide: Adapter protein MecA (239 aa).

Residues 118 to 128 are compositionally biased toward basic and acidic residues; it reads EQRTKEKEAQG. The segment at 118–137 is disordered; it reads EQRTKEKEAQGSKRQKSSAR.

It belongs to the MecA family. As to quaternary structure, homodimer.

In terms of biological role, enables the recognition and targeting of unfolded and aggregated proteins to the ClpC protease or to other proteins involved in proteolysis. In Staphylococcus aureus (strain JH1), this protein is Adapter protein MecA.